A 225-amino-acid polypeptide reads, in one-letter code: CRISPR pre-crRNA endoribonuclease Cas5d (225 aa).

It belongs to the CRISPR-associated protein Cas5 family. Subtype I-C/Dvulg subfamily. It depends on Does not require a metal cofactor. as a cofactor.

CRISPR (clustered regularly interspaced short palindromic repeat) is an adaptive immune system that provides protection against mobile genetic elements (viruses, transposable elements and conjugative plasmids). CRISPR clusters contain spacers, sequences complementary to antecedent mobile elements, and target invading nucleic acids. CRISPR clusters are transcribed and processed into CRISPR RNA (crRNA). This protein is a sequence-specific endonuclease that cleaves pre-crRNA at G21 into mature crRNA. Does not cleave pre-crRNA associated with the T.thermophilus strain HB27 Cas5 protein (AC Q746C2) CRISPR locus. The reaction mechanism may proceed by an intramolecular attack of the 2'-hydroxyl group of G21 on the scissile phosphodiester, cutting the precursor 3' to G21 residue yielding 5'-hydroxyl and 2' and/or 3' ends lacking a hydroxyl group (perhaps a 2'/3' cyclic phosphodiester). The sequence is that of CRISPR pre-crRNA endoribonuclease Cas5d from Mannheimia succiniciproducens (strain KCTC 0769BP / MBEL55E).